Consider the following 545-residue polypeptide: Chaperonin GroEL 1 (545 aa).

ATP is bound by residues 29–32 (TLGP), 86–90 (DGTTT), Gly413, 477–479 (NAA), and Asp493.

It belongs to the chaperonin (HSP60) family. In terms of assembly, forms a cylinder of 14 subunits composed of two heptameric rings stacked back-to-back. Interacts with the co-chaperonin GroES.

It localises to the cytoplasm. It carries out the reaction ATP + H2O + a folded polypeptide = ADP + phosphate + an unfolded polypeptide.. Its function is as follows. Together with its co-chaperonin GroES, plays an essential role in assisting protein folding. The GroEL-GroES system forms a nano-cage that allows encapsulation of the non-native substrate proteins and provides a physical environment optimized to promote and accelerate protein folding. The polypeptide is Chaperonin GroEL 1 (Arthrobacter sp. (strain FB24)).